The following is a 177-amino-acid chain: Large ribosomal subunit protein uL5 (177 aa).

The protein belongs to the universal ribosomal protein uL5 family. In terms of assembly, part of the 50S ribosomal subunit; part of the 5S rRNA/L5/L18/L25 subcomplex. Contacts the 5S rRNA and the P site tRNA. Forms a bridge to the 30S subunit in the 70S ribosome.

In terms of biological role, this is one of the proteins that bind and probably mediate the attachment of the 5S RNA into the large ribosomal subunit, where it forms part of the central protuberance. In the 70S ribosome it contacts protein S13 of the 30S subunit (bridge B1b), connecting the 2 subunits; this bridge is implicated in subunit movement. Contacts the P site tRNA; the 5S rRNA and some of its associated proteins might help stabilize positioning of ribosome-bound tRNAs. The chain is Large ribosomal subunit protein uL5 from Ehrlichia canis (strain Jake).